Consider the following 33-residue polypeptide: ATP synthase 27 kDa subunit, mitochondrial (33 aa).

It localises to the mitochondrion. The protein resides in the mitochondrion inner membrane. In terms of biological role, mitochondrial membrane ATP synthase (F(1)F(0) ATP synthase or Complex V) produces ATP from ADP in the presence of a proton gradient across the membrane which is generated by electron transport complexes of the respiratory chain. F-type ATPases consist of two structural domains, F(1) - containing the extramembraneous catalytic core and F(0) - containing the membrane proton channel, linked together by a central stalk and a peripheral stalk. During catalysis, ATP synthesis in the catalytic domain of F(1) is coupled via a rotary mechanism of the central stalk subunits to proton translocation. Part of the complex F(0) domain. This Solanum tuberosum (Potato) protein is ATP synthase 27 kDa subunit, mitochondrial.